A 1479-amino-acid chain; its full sequence is Chromosome partition protein MukB (1479 aa).

34 to 41 is a binding site for ATP; the sequence is GGNGAGKS. 5 coiled-coil regions span residues 337–418, 511–604, 780–810, 847–1116, and 1206–1265; these read LNLV…QYQQ, QAER…APVW, RAAREMRLEGLRDEREALAEQYATLSFDVQK, ELDR…AKAG, and DDPV…LQAV. A flexible hinge region spans residues 666–783; that stretch reads PGGSEDPRLN…EVPLFGRAAR (118 aa).

It belongs to the SMC family. MukB subfamily. In terms of assembly, homodimerization via its hinge domain. Binds to DNA via its C-terminal region. Interacts, and probably forms a ternary complex, with MukE and MukF via its C-terminal region. The complex formation is stimulated by calcium or magnesium. Interacts with tubulin-related protein FtsZ.

The protein resides in the cytoplasm. It localises to the nucleoid. In terms of biological role, plays a central role in chromosome condensation, segregation and cell cycle progression. Functions as a homodimer, which is essential for chromosome partition. Involved in negative DNA supercoiling in vivo, and by this means organize and compact chromosomes. May achieve or facilitate chromosome segregation by condensation DNA from both sides of a centrally located replisome during cell division. The chain is Chromosome partition protein MukB from Pectobacterium atrosepticum (strain SCRI 1043 / ATCC BAA-672) (Erwinia carotovora subsp. atroseptica).